A 293-amino-acid polypeptide reads, in one-letter code: Glycine--tRNA ligase alpha subunit (293 aa).

Belongs to the class-II aminoacyl-tRNA synthetase family. Tetramer of two alpha and two beta subunits.

The protein localises to the cytoplasm. It carries out the reaction tRNA(Gly) + glycine + ATP = glycyl-tRNA(Gly) + AMP + diphosphate. The protein is Glycine--tRNA ligase alpha subunit of Acaryochloris marina (strain MBIC 11017).